Reading from the N-terminus, the 212-residue chain is Acyl-homoserine-lactone synthase (212 aa).

The protein belongs to the autoinducer synthase family.

It carries out the reaction a fatty acyl-[ACP] + S-adenosyl-L-methionine = an N-acyl-L-homoserine lactone + S-methyl-5'-thioadenosine + holo-[ACP] + H(+). Its function is as follows. Required for the synthesis of OHHL (N-(3-oxohexanoyl)-L-homoserine lactone), an autoinducer molecule which binds to ExpR and thus acts in virulence (soft rot disease) through the activation of genes for plant tissue macerating enzymes. This is Acyl-homoserine-lactone synthase (expI) from Dickeya dadantii (strain 3937) (Erwinia chrysanthemi (strain 3937)).